We begin with the raw amino-acid sequence, 102 residues long: Large ribosomal subunit protein uL23 (102 aa).

The protein belongs to the universal ribosomal protein uL23 family. As to quaternary structure, part of the 50S ribosomal subunit. Contacts protein L29, and trigger factor when it is bound to the ribosome.

In terms of biological role, one of the early assembly proteins it binds 23S rRNA. One of the proteins that surrounds the polypeptide exit tunnel on the outside of the ribosome. Forms the main docking site for trigger factor binding to the ribosome. In Methylobacillus flagellatus (strain ATCC 51484 / DSM 6875 / VKM B-1610 / KT), this protein is Large ribosomal subunit protein uL23.